The primary structure comprises 109 residues: Hainantoxin-XVIII.2 (109 aa).

The N-terminal stretch at 1–18 (MKLSIIIIVTSLVIAVVA) is a signal peptide. The propeptide occupies 19–46 (FPSKDSKAIENDKTEQRMEIVVQETARA). 4 disulfides stabilise this stretch: Cys47/Cys62, Cys55/Cys68, Cys59/Cys108, and Cys61/Cys81.

Belongs to the neurotoxin 25 family. F7 subfamily. In terms of tissue distribution, expressed by the venom gland.

It localises to the secreted. Putative ion channel inhibitor. This is Hainantoxin-XVIII.2 from Cyriopagopus hainanus (Chinese bird spider).